A 318-amino-acid chain; its full sequence is UPF0725 protein At3g44770 (318 aa).

The protein belongs to the UPF0725 (EMB2204) family.

The chain is UPF0725 protein At3g44770 from Arabidopsis thaliana (Mouse-ear cress).